A 1296-amino-acid polypeptide reads, in one-letter code: Aggregation substance (1296 aa).

A signal peptide spans 1 to 43; sequence MKQQTEVKKRFKMYKAKKHWVVAPILFIGVLGVVGLATDDVQA. Disordered stretches follow at residues 48–188 and 1221–1245; these read TQPG…KPAE and HTPEKPQTPPEKTVIVPPTPKTPQA. Over residues 89-99 the composition is skewed to basic and acidic residues; that stretch reads KVEEVASEKNG. Composition is skewed to polar residues over residues 100-117 and 125-138; these read AEQSSATPNDTTNAQQPT and QEQPVVSPETTNEP. Positions 160-178 are enriched in basic and acidic residues; the sequence is KEFETPDVDKAVDEAKKDP. Residues 1261-1265 carry the LPXTG sorting signal motif; sequence LPQTG. Thr-1264 carries the post-translational modification Pentaglycyl murein peptidoglycan amidated threonine. Positions 1265–1296 are cleaved as a propeptide — removed by sortase; that stretch reads GEKQNVLLTVAGSLAAMLGLAGLGFKRRKETK.

This sequence belongs to the antigen I/II family.

The protein localises to the secreted. It is found in the cell wall. Aggregation substance allows donor and recipient strains to form tight aggregates which allow the non-motile bacteria to maintain physical contact over a period of time sufficient to permit conjugative transfer of the sex pheromone plasmid from donor to recipient strains. This Enterococcus faecalis (strain ATCC 700802 / V583) protein is Aggregation substance (asa1).